The following is a 276-amino-acid chain: Putative phosphoenolpyruvate synthase regulatory protein (276 aa).

156 to 163 lines the ADP pocket; that stretch reads GVSRSGKT.

This sequence belongs to the pyruvate, phosphate/water dikinase regulatory protein family. PSRP subfamily.

It catalyses the reaction [pyruvate, water dikinase] + ADP = [pyruvate, water dikinase]-phosphate + AMP + H(+). It carries out the reaction [pyruvate, water dikinase]-phosphate + phosphate + H(+) = [pyruvate, water dikinase] + diphosphate. Its function is as follows. Bifunctional serine/threonine kinase and phosphorylase involved in the regulation of the phosphoenolpyruvate synthase (PEPS) by catalyzing its phosphorylation/dephosphorylation. This chain is Putative phosphoenolpyruvate synthase regulatory protein, found in Acidovorax ebreus (strain TPSY) (Diaphorobacter sp. (strain TPSY)).